Reading from the N-terminus, the 240-residue chain is Protein MGARP (240 aa).

The Cytoplasmic portion of the chain corresponds to 1 to 40 (MYLRRAVSKTLALPLRAPPNPAPLGKDASLRRMSSNRFPG). The helical; Anchor for type IV membrane protein transmembrane segment at 41–63 (SSGSNMIYYLVVGVTVSAGGYYA) threads the bilayer. Residues 64–240 (YKTVTSDQAK…VGSEAASAQG (177 aa)) lie on the Mitochondrial intermembrane side of the membrane. Residues 166–240 (RETTEVNPET…VGSEAASAQG (75 aa)) are disordered. Positions 170 to 181 (EVNPETTPEVTN) are enriched in low complexity. Residues 191 to 201 (DNDKDTTKNET) show a composition bias toward basic and acidic residues. Residues 202-213 (SDEYAELEEENS) are compositionally biased toward acidic residues. Over residues 228–240 (EASVGSEAASAQG) the composition is skewed to low complexity.

As to quaternary structure, interacts with RHOT1/Miro-1, TRAK1/OIP106 and TRAK2/GRIF1. Interacts with RHOT2/Miro-2. Expressed in the brain, adrenal gland and corneal endothelium (CE). Expressed in steroid-producing cells of the ovary and testis (at protein level). Expressed in steroid-producing cells of the ovary and testis. Weakly expressed in placenta. Expressed in corneal endothelial cells.

It is found in the mitochondrion. The protein resides in the mitochondrion outer membrane. It localises to the mitochondrion inner membrane. Plays a role in the trafficking of mitochondria along microtubules. Regulates the kinesin-mediated axonal transport of mitochondria to nerve terminals along microtubules during hypoxia. Participates in the translocation of TRAK2/GRIF1 from the cytoplasm to the mitochondrion. Also plays a role in steroidogenesis through maintenance of mitochondrial abundance and morphology. Plays an inhibitory role during neocortex development by regulating mitochondrial morphology, distribution and motility in neocortical neurons. This chain is Protein MGARP (MGARP), found in Homo sapiens (Human).